Consider the following 155-residue polypeptide: Small ribosomal subunit protein uS7c (155 aa).

The protein belongs to the universal ribosomal protein uS7 family. Part of the 30S ribosomal subunit.

The protein localises to the plastid. It localises to the chloroplast. Functionally, one of the primary rRNA binding proteins, it binds directly to 16S rRNA where it nucleates assembly of the head domain of the 30S subunit. The protein is Small ribosomal subunit protein uS7c (rps7) of Pinus thunbergii (Japanese black pine).